Here is a 605-residue protein sequence, read N- to C-terminus: Aspartate--tRNA(Asp/Asn) ligase (605 aa).

Residue Glu176 coordinates L-aspartate. The interval 200–203 (QQFK) is aspartate. Residues Arg222 and His452 each coordinate L-aspartate. An ATP-binding site is contributed by 222–224 (RDE). Glu490 provides a ligand contact to ATP. Arg497 contributes to the L-aspartate binding site. ATP is bound at residue 542-545 (GIDR).

It belongs to the class-II aminoacyl-tRNA synthetase family. Type 1 subfamily. As to quaternary structure, homodimer.

It localises to the cytoplasm. It catalyses the reaction tRNA(Asx) + L-aspartate + ATP = L-aspartyl-tRNA(Asx) + AMP + diphosphate. Its function is as follows. Aspartyl-tRNA synthetase with relaxed tRNA specificity since it is able to aspartylate not only its cognate tRNA(Asp) but also tRNA(Asn). Reaction proceeds in two steps: L-aspartate is first activated by ATP to form Asp-AMP and then transferred to the acceptor end of tRNA(Asp/Asn). This is Aspartate--tRNA(Asp/Asn) ligase from Rickettsia prowazekii (strain Madrid E).